A 432-amino-acid chain; its full sequence is 3-phosphoshikimate 1-carboxyvinyltransferase (432 aa).

Residues Lys22, Ser23, and Arg27 each coordinate 3-phosphoshikimate. A phosphoenolpyruvate-binding site is contributed by Lys22. Residues Gly96 and Arg127 each coordinate phosphoenolpyruvate. 3-phosphoshikimate-binding residues include Ser173, Ser174, Gln175, Ser201, Asp316, Asn339, and Lys343. Gln175 contributes to the phosphoenolpyruvate binding site. Catalysis depends on Asp316, which acts as the Proton acceptor. Residues Arg347, Arg391, and Lys416 each contribute to the phosphoenolpyruvate site.

It belongs to the EPSP synthase family. Monomer.

Its subcellular location is the cytoplasm. It catalyses the reaction 3-phosphoshikimate + phosphoenolpyruvate = 5-O-(1-carboxyvinyl)-3-phosphoshikimate + phosphate. The protein operates within metabolic intermediate biosynthesis; chorismate biosynthesis; chorismate from D-erythrose 4-phosphate and phosphoenolpyruvate: step 6/7. Functionally, catalyzes the transfer of the enolpyruvyl moiety of phosphoenolpyruvate (PEP) to the 5-hydroxyl of shikimate-3-phosphate (S3P) to produce enolpyruvyl shikimate-3-phosphate and inorganic phosphate. The chain is 3-phosphoshikimate 1-carboxyvinyltransferase from Haemophilus influenzae (strain 86-028NP).